The following is a 59-amino-acid chain: Large ribosomal subunit protein uL30 (59 aa).

Belongs to the universal ribosomal protein uL30 family. In terms of assembly, part of the 50S ribosomal subunit.

This Sulfurihydrogenibium sp. (strain YO3AOP1) protein is Large ribosomal subunit protein uL30.